A 101-amino-acid polypeptide reads, in one-letter code: Small ribosomal subunit protein bS16 (101 aa).

It belongs to the bacterial ribosomal protein bS16 family.

This Ureaplasma urealyticum serovar 10 (strain ATCC 33699 / Western) protein is Small ribosomal subunit protein bS16.